Consider the following 587-residue polypeptide: APOBEC1 complementation factor (587 aa).

3 RRM domains span residues 56–134 (CEIF…ASVD), 136–218 (CRLF…WAEP), and 231–303 (KILY…LAKP). A required for nuclear localization region spans residues 360–409 (HFPATKGHLSNRAIIRAPSVRGAAGVRGLGGRGYLAYTGLGRGYQVKGDK). Thr491 is modified (phosphothreonine).

As to quaternary structure, part of the apolipoprotein B mRNA editing complex with APOBEC1. Interacts with TNPO2; TNPO2 may be responsible for transport of A1CF into the nucleus. Interacts with SYNCRIP. Interacts with CELF2/CUGBP2. Interacts with RBM47.

The protein resides in the nucleus. Its subcellular location is the endoplasmic reticulum. It is found in the cytoplasm. Functionally, essential component of the apolipoprotein B mRNA editing enzyme complex which is responsible for the postranscriptional editing of a CAA codon for Gln to a UAA codon for stop in APOB mRNA. Binds to APOB mRNA and is probably responsible for docking the catalytic subunit, APOBEC1, to the mRNA to allow it to deaminate its target cytosine. The complex also seems to protect the edited APOB mRNA from nonsense-mediated decay. The polypeptide is APOBEC1 complementation factor (A1CF) (Pongo abelii (Sumatran orangutan)).